The chain runs to 331 residues: Adenosine deaminase (331 aa).

Zn(2+) contacts are provided by His-12 and His-14. Residues His-14, Asp-16, and Gly-170 each contribute to the substrate site. Position 197 (His-197) interacts with Zn(2+). The active-site Proton donor is Glu-200. Asp-278 serves as a coordination point for Zn(2+). Asp-279 is a binding site for substrate.

This sequence belongs to the metallo-dependent hydrolases superfamily. Adenosine and AMP deaminases family. Adenosine deaminase subfamily. Zn(2+) serves as cofactor.

It carries out the reaction adenosine + H2O + H(+) = inosine + NH4(+). It catalyses the reaction 2'-deoxyadenosine + H2O + H(+) = 2'-deoxyinosine + NH4(+). Catalyzes the hydrolytic deamination of adenosine and 2-deoxyadenosine. This chain is Adenosine deaminase, found in Shewanella sp. (strain MR-4).